A 275-amino-acid polypeptide reads, in one-letter code: 2,3,4,5-tetrahydropyridine-2,6-dicarboxylate N-succinyltransferase (275 aa).

Residues arginine 106 and aspartate 143 each contribute to the substrate site.

Belongs to the transferase hexapeptide repeat family. As to quaternary structure, homotrimer.

Its subcellular location is the cytoplasm. The catalysed reaction is (S)-2,3,4,5-tetrahydrodipicolinate + succinyl-CoA + H2O = (S)-2-succinylamino-6-oxoheptanedioate + CoA. It functions in the pathway amino-acid biosynthesis; L-lysine biosynthesis via DAP pathway; LL-2,6-diaminopimelate from (S)-tetrahydrodipicolinate (succinylase route): step 1/3. The chain is 2,3,4,5-tetrahydropyridine-2,6-dicarboxylate N-succinyltransferase from Burkholderia pseudomallei (strain 1106a).